We begin with the raw amino-acid sequence, 159 residues long: Transcription elongation factor GreA (159 aa).

The stretch at 46 to 73 forms a coiled coil; that stretch reads AEYHAAKEEQSFVEGRIKEIELKLSRMQ.

Belongs to the GreA/GreB family.

Functionally, necessary for efficient RNA polymerase transcription elongation past template-encoded arresting sites. The arresting sites in DNA have the property of trapping a certain fraction of elongating RNA polymerases that pass through, resulting in locked ternary complexes. Cleavage of the nascent transcript by cleavage factors such as GreA or GreB allows the resumption of elongation from the new 3'terminus. GreA releases sequences of 2 to 3 nucleotides. In Vesicomyosocius okutanii subsp. Calyptogena okutanii (strain HA), this protein is Transcription elongation factor GreA.